A 691-amino-acid polypeptide reads, in one-letter code: Elongation factor G (691 aa).

Residues 10–284 enclose the tr-type G domain; that stretch reads KRLRNIGIAA…AVVDYLPSPL (275 aa). Residues 19-26, 83-87, and 137-140 contribute to the GTP site; these read AHIDAGKT, DTPGH, and NKMD.

This sequence belongs to the TRAFAC class translation factor GTPase superfamily. Classic translation factor GTPase family. EF-G/EF-2 subfamily.

The protein resides in the cytoplasm. Catalyzes the GTP-dependent ribosomal translocation step during translation elongation. During this step, the ribosome changes from the pre-translocational (PRE) to the post-translocational (POST) state as the newly formed A-site-bound peptidyl-tRNA and P-site-bound deacylated tRNA move to the P and E sites, respectively. Catalyzes the coordinated movement of the two tRNA molecules, the mRNA and conformational changes in the ribosome. The sequence is that of Elongation factor G (fusA) from Thermus thermophilus (strain ATCC 27634 / DSM 579 / HB8).